Here is a 669-residue protein sequence, read N- to C-terminus: Translation factor GUF1, mitochondrial (669 aa).

The transit peptide at 1–49 (MWTLAGQGWWRGRALAAWVTEAARKGLLWPHLAPARGTAAESRAPDRCY) directs the protein to the mitochondrion. The tr-type G domain occupies 66–247 (ENTRNFSIIA…AVIKRIPFPK (182 aa)). GTP-binding positions include 75–82 (AHVDHGKS), 140–144 (DTPGH), and 194–197 (NKID).

It belongs to the TRAFAC class translation factor GTPase superfamily. Classic translation factor GTPase family. LepA subfamily.

It is found in the mitochondrion inner membrane. The enzyme catalyses GTP + H2O = GDP + phosphate + H(+). Its function is as follows. Promotes mitochondrial protein synthesis. May act as a fidelity factor of the translation reaction, by catalyzing a one-codon backward translocation of tRNAs on improperly translocated ribosomes. Binds to mitochondrial ribosomes in a GTP-dependent manner. The polypeptide is Translation factor GUF1, mitochondrial (Bos taurus (Bovine)).